We begin with the raw amino-acid sequence, 85 residues long: UPF0297 protein CHY_0540 (85 aa).

Belongs to the UPF0297 family.

The chain is UPF0297 protein CHY_0540 from Carboxydothermus hydrogenoformans (strain ATCC BAA-161 / DSM 6008 / Z-2901).